Here is an 854-residue protein sequence, read N- to C-terminus: SH2 domain-containing protein 3C (854 aa).

A Phosphoserine modification is found at serine 22. Residues 34-43 (RSSASASIRS) show a composition bias toward low complexity. The disordered stretch occupies residues 34–129 (RSSASASIRS…AKEAGEGTEA (96 aa)). Residues 99–124 (EVSRESHLVSRRLPEPPDLEAAKEAG) are compositionally biased toward basic and acidic residues. Positions 215-314 (WYHGRIPREV…QSGAIIYCPV (100 aa)) constitute an SH2 domain. Tyrosine 273 and tyrosine 278 each carry phosphotyrosine. Disordered stretches follow at residues 330 to 384 (SQGS…PRDS), 398 to 417 (LHSP…YSTV), and 422 to 520 (APSA…ERQK). Over residues 333–347 (SSKTASPASPSGSKG) the composition is skewed to low complexity. The residue at position 354 (serine 354) is a Phosphoserine. 3 stretches are compositionally biased toward low complexity: residues 400–415 (SPLS…PAYS), 422–436 (APSA…PASP), and 474–485 (SPSPSLSSYSDP). Position 435 is a phosphoserine (serine 435). Over residues 508–520 (TPRKARGSGERQK) the composition is skewed to basic and acidic residues. Positions 580–848 (DARTLARHVT…TALSHKLEPA (269 aa)) constitute a Ras-GEF domain. Tyrosine 787 carries the post-translational modification Phosphotyrosine.

Component of a complex comprised of SH2D3C, BCAR1/CAS, and CRK. Within the complex, interacts with CRK and (via C-terminus) with BCAR1/CAS (via C-terminus). Interacts with NEDD9/HEF1. Interacts with EPHB2. As to quaternary structure, interacts with NEDD9/HEF1. Interacts with BCAR1/CAS. Interacts with PTK2B. In terms of assembly, interacts (via C-terminus) with BCAR1/CAS (via C-terminus). Interacts with IGF1. Post-translationally, phosphorylated by MAPK/ERK upon T-cell receptor stimulation in T-cells. As to expression, expressed in the olfactory bulb and olfactory sensory neurons (at protein level). Expressed in B cells (at protein level). Expressed in T lymphocytes. Expressed in hematopoietic cells from spleen, lymph node and thymus (at protein level). Expressed weakly in the lung (at protein level). In terms of tissue distribution, expressed in the brain, lung, kidney, and weakly expressed in the liver and lung (at protein level).

It is found in the cytoplasm. The protein resides in the cell membrane. Its subcellular location is the cell projection. The protein localises to the axon. It localises to the ruffle membrane. Its function is as follows. Acts as an adapter protein that mediates cell signaling pathways involved in cellular functions such as cell adhesion and migration, tissue organization, and the regulation of the immune response. Plays a role in integrin-mediated cell adhesion through BCAR1-CRK-RAPGEF1 signaling and activation of the small GTPase RAP1. Promotes cell migration and invasion through the extracellular matrix. Required for marginal zone B-cell development and thymus-independent type 2 immune responses. Mediates migration and adhesion of B cells in the splenic marginal zone via promoting hyperphosphorylation of NEDD9/CASL. Plays a role in CXCL13-induced chemotaxis of B-cells. Plays a role in the migration of olfactory sensory neurons (OSNs) into the forebrain and the innervation of the olfactory bulb by the OSN axons during development. Required for the efficient tyrosine phosphorylation of BCAR1 in OSN axons. Functionally, important regulator of chemokine-induced, integrin-mediated T lymphocyte adhesion and migration, acting upstream of RAP1. Required for tissue-specific adhesion of T lymphocytes to peripheral tissues. Required for basal and CXCL2 stimulated serine-threonine phosphorylation of NEDD9. May be involved in the regulation of T-cell receptor-mediated IL2 production through the activation of the JNK pathway in T-cells. In terms of biological role, may be involved in the BCAR1/CAS-mediated JNK activation pathway. In Mus musculus (Mouse), this protein is SH2 domain-containing protein 3C (Sh2d3c).